The following is a 101-amino-acid chain: MARPLEEALDVIVSTFHKYSGNEGDKFKLNKTELKELLTRELPSFLGRRTDEAAFQKLMNNLDSNRDNEVDFQEYCVFLSCIAMMCNEFFEGCPDKEPRKK.

N-acetylalanine is present on alanine 2. EF-hand domains lie at 12–47 (IVST…SFLG) and 50–85 (TDEA…IAMM). 2 residues coordinate Ca(2+): lysine 28 and glutamate 33. Lysine 35 is modified (N6-acetyllysine). Ca(2+) contacts are provided by aspartate 63, asparagine 65, aspartate 67, glutamate 69, and glutamate 74.

This sequence belongs to the S-100 family. In terms of assembly, homodimer. Interacts with PPFIBP1 in a calcium-dependent mode. Interacts with PGLYRP1; this complex acts as a chemoattractant that promotes lymphocyte movement. Interacts with MYH9; this interaction increases cell motility. Interacts with Annexin 2/ANXA2. Interacts with TP53; this interaction promotes TP53 degradation. Interacts with CCR5 and CXCR3. Interacts with FCGR3A; this interaction inhibits PKC-dependent phosphorylation of FCGR3A.

It is found in the secreted. Its subcellular location is the nucleus. It localises to the cytoplasm. Its function is as follows. Calcium-binding protein that plays a role in various cellular processes including motility, angiogenesis, cell differentiation, apoptosis, and autophagy. Increases cell motility and invasiveness by interacting with non-muscle myosin heavy chain (NMMHC) IIA/MYH9. Mechanistically, promotes filament depolymerization and increases the amount of soluble myosin-IIA, resulting in the formation of stable protrusions facilitating chemotaxis. Also modulates the pro-apoptotic function of TP53 by binding to its C-terminal transactivation domain within the nucleus and reducing its protein levels. Within the extracellular space, stimulates cytokine production including granulocyte colony-stimulating factor and CCL24 from T-lymphocytes. In addition, stimulates T-lymphocyte chemotaxis by acting as a chemoattractant complex with PGLYRP1 that promotes lymphocyte migration via CCR5 and CXCR3 receptors. The chain is Protein S100-A4 (S100a4) from Rattus norvegicus (Rat).